The following is a 324-amino-acid chain: Beta-ketoacyl-[acyl-carrier-protein] synthase III (324 aa).

Catalysis depends on residues Cys114 and His251. The tract at residues 252–256 (QANKR) is ACP-binding. Asn281 is a catalytic residue.

The protein belongs to the thiolase-like superfamily. FabH family. In terms of assembly, homodimer.

It is found in the cytoplasm. It carries out the reaction malonyl-[ACP] + acetyl-CoA + H(+) = 3-oxobutanoyl-[ACP] + CO2 + CoA. It functions in the pathway lipid metabolism; fatty acid biosynthesis. Its function is as follows. Catalyzes the condensation reaction of fatty acid synthesis by the addition to an acyl acceptor of two carbons from malonyl-ACP. Catalyzes the first condensation reaction which initiates fatty acid synthesis and may therefore play a role in governing the total rate of fatty acid production. Possesses both acetoacetyl-ACP synthase and acetyl transacylase activities. Its substrate specificity determines the biosynthesis of branched-chain and/or straight-chain of fatty acids. The protein is Beta-ketoacyl-[acyl-carrier-protein] synthase III of Bradyrhizobium sp. (strain BTAi1 / ATCC BAA-1182).